Consider the following 336-residue polypeptide: Anthranilate phosphoribosyltransferase (336 aa).

Residues Gly-79, 82-83 (GD), Thr-87, 89-92 (NIST), 107-115 (KHGNRCVSS), and Ala-119 contribute to the 5-phospho-alpha-D-ribose 1-diphosphate site. Gly-79 contributes to the anthranilate binding site. Mg(2+) is bound at residue Ser-91. Position 110 (Asn-110) interacts with anthranilate. Arg-165 provides a ligand contact to anthranilate. The Mg(2+) site is built by Asp-224 and Glu-225.

Belongs to the anthranilate phosphoribosyltransferase family. In terms of assembly, homodimer. Mg(2+) serves as cofactor.

The catalysed reaction is N-(5-phospho-beta-D-ribosyl)anthranilate + diphosphate = 5-phospho-alpha-D-ribose 1-diphosphate + anthranilate. It functions in the pathway amino-acid biosynthesis; L-tryptophan biosynthesis; L-tryptophan from chorismate: step 2/5. Its function is as follows. Catalyzes the transfer of the phosphoribosyl group of 5-phosphorylribose-1-pyrophosphate (PRPP) to anthranilate to yield N-(5'-phosphoribosyl)-anthranilate (PRA). The sequence is that of Anthranilate phosphoribosyltransferase from Lachnoclostridium phytofermentans (strain ATCC 700394 / DSM 18823 / ISDg) (Clostridium phytofermentans).